The following is a 273-amino-acid chain: 2,3,4,5-tetrahydropyridine-2,6-dicarboxylate N-succinyltransferase (273 aa).

The substrate site is built by R104 and D141.

It belongs to the transferase hexapeptide repeat family. In terms of assembly, homotrimer.

The protein localises to the cytoplasm. The catalysed reaction is (S)-2,3,4,5-tetrahydrodipicolinate + succinyl-CoA + H2O = (S)-2-succinylamino-6-oxoheptanedioate + CoA. The protein operates within amino-acid biosynthesis; L-lysine biosynthesis via DAP pathway; LL-2,6-diaminopimelate from (S)-tetrahydrodipicolinate (succinylase route): step 1/3. The polypeptide is 2,3,4,5-tetrahydropyridine-2,6-dicarboxylate N-succinyltransferase (Psychrobacter arcticus (strain DSM 17307 / VKM B-2377 / 273-4)).